The sequence spans 311 residues: Elongation factor Ts (311 aa).

Positions 81 to 84 are involved in Mg(2+) ion dislocation from EF-Tu; the sequence is TDFV.

It belongs to the EF-Ts family.

It localises to the cytoplasm. In terms of biological role, associates with the EF-Tu.GDP complex and induces the exchange of GDP to GTP. It remains bound to the aminoacyl-tRNA.EF-Tu.GTP complex up to the GTP hydrolysis stage on the ribosome. The chain is Elongation factor Ts from Trichlorobacter lovleyi (strain ATCC BAA-1151 / DSM 17278 / SZ) (Geobacter lovleyi).